Here is a 212-residue protein sequence, read N- to C-terminus: uncharacterized protein (212 aa).

The disordered stretch occupies residues 47–129 (RELLDRRRSQ…GNIDNGQPRR (83 aa)).

This is an uncharacterized protein from Caenorhabditis elegans.